Consider the following 906-residue polypeptide: Protein translocase subunit SecA (906 aa).

Residues Gln86, 104–108, and Asp499 each bind ATP; that span reads GEGKT. A disordered region spans residues 862 to 885; the sequence is KPVVSRIDPKDRNPDDPTSWGRVS. Residues Cys890, Cys892, Cys901, and His902 each contribute to the Zn(2+) site.

Belongs to the SecA family. Monomer and homodimer. Part of the essential Sec protein translocation apparatus which comprises SecA, SecYEG and auxiliary proteins SecDF-YajC and YidC. It depends on Zn(2+) as a cofactor.

The protein resides in the cell inner membrane. It localises to the cytoplasm. It carries out the reaction ATP + H2O + cellular proteinSide 1 = ADP + phosphate + cellular proteinSide 2.. In terms of biological role, part of the Sec protein translocase complex. Interacts with the SecYEG preprotein conducting channel. Has a central role in coupling the hydrolysis of ATP to the transfer of proteins into and across the cell membrane, serving both as a receptor for the preprotein-SecB complex and as an ATP-driven molecular motor driving the stepwise translocation of polypeptide chains across the membrane. The chain is Protein translocase subunit SecA from Rickettsia massiliae (strain Mtu5).